Here is a 297-residue protein sequence, read N- to C-terminus: Calponin-1 (297 aa).

The 104-residue stretch at 28–131 (HQREQELREW…STLLALASMA (104 aa)) folds into the Calponin-homology (CH) domain. Calponin-like repeat units lie at residues 164 to 189 (IGLQ…RHLY), 204 to 229 (ISLQ…RQIF), and 243 to 268 (VSLQ…RQVY). Thr-170 is modified (phosphothreonine; by ROCK2). At Ser-175 the chain carries Phosphoserine; by ROCK2. Phosphothreonine; by ROCK2 occurs at positions 180 and 184. Phosphothreonine; by ROCK2 is present on Thr-259.

The protein belongs to the calponin family. Part of cGMP kinase signaling complex at least composed of ACTA2/alpha-actin, CNN1/calponin H1, PLN/phospholamban, PRKG1 and ITPR1. In terms of tissue distribution, smooth muscle, and tissues containing significant amounts of smooth muscle.

Functionally, thin filament-associated protein that is implicated in the regulation and modulation of smooth muscle contraction. It is capable of binding to actin, calmodulin and tropomyosin. The interaction of calponin with actin inhibits the actomyosin Mg-ATPase activity. This Mus musculus (Mouse) protein is Calponin-1 (Cnn1).